Consider the following 428-residue polypeptide: Flotillin-1 (428 aa).

Phosphoserine is present on residues Ser19, Ser163, and Ser385. At Thr387 the chain carries Phosphothreonine.

Belongs to the band 7/mec-2 family. Flotillin subfamily. As to quaternary structure, heterooligomeric complex of flotillin-1 and flotillin-2 and caveolin-1 and caveolin-2. Interacts with ECPAS. High expression in brain, white adipose tissue, heart muscle, skeletal muscle and lung. Low expression in spleen, liver and testis.

The protein resides in the cell membrane. It is found in the endosome. The protein localises to the membrane. It localises to the caveola. Its subcellular location is the melanosome. The protein resides in the membrane raft. May act as a scaffolding protein within caveolar membranes, functionally participating in formation of caveolae or caveolae-like vesicles. This is Flotillin-1 (Flot1) from Mus musculus (Mouse).